Here is a 531-residue protein sequence, read N- to C-terminus: Peptide chain release factor 3 (531 aa).

The region spanning 13 to 282 is the tr-type G domain; the sequence is AKRRTFAIIS…TLIKYAPPPK (270 aa). Residues 22-29, 90-94, and 144-147 each bind GTP; these read SHPDAGKT, DTPGH, and NKLD.

This sequence belongs to the TRAFAC class translation factor GTPase superfamily. Classic translation factor GTPase family. PrfC subfamily.

It localises to the cytoplasm. Increases the formation of ribosomal termination complexes and stimulates activities of RF-1 and RF-2. It binds guanine nucleotides and has strong preference for UGA stop codons. It may interact directly with the ribosome. The stimulation of RF-1 and RF-2 is significantly reduced by GTP and GDP, but not by GMP. The protein is Peptide chain release factor 3 of Psychrobacter cryohalolentis (strain ATCC BAA-1226 / DSM 17306 / VKM B-2378 / K5).